Consider the following 289-residue polypeptide: Thymidylate synthase (289 aa).

DUMP is bound by residues Arg21 and 150–151 (RR). Cys170 (nucleophile) is an active-site residue. DUMP-binding positions include 191–194 (RSAD), Asn202, and 232–234 (HIY). Residue Asp194 participates in (6R)-5,10-methylene-5,6,7,8-tetrahydrofolate binding. Position 288 (Ala288) interacts with (6R)-5,10-methylene-5,6,7,8-tetrahydrofolate.

It belongs to the thymidylate synthase family. Bacterial-type ThyA subfamily. In terms of assembly, homodimer.

The protein localises to the cytoplasm. It catalyses the reaction dUMP + (6R)-5,10-methylene-5,6,7,8-tetrahydrofolate = 7,8-dihydrofolate + dTMP. Its pathway is pyrimidine metabolism; dTTP biosynthesis. In terms of biological role, catalyzes the reductive methylation of 2'-deoxyuridine-5'-monophosphate (dUMP) to 2'-deoxythymidine-5'-monophosphate (dTMP) while utilizing 5,10-methylenetetrahydrofolate (mTHF) as the methyl donor and reductant in the reaction, yielding dihydrofolate (DHF) as a by-product. This enzymatic reaction provides an intracellular de novo source of dTMP, an essential precursor for DNA biosynthesis. The polypeptide is Thymidylate synthase (Malacoplasma penetrans (strain HF-2) (Mycoplasma penetrans)).